The chain runs to 229 residues: MSQPRPLLSPPETEEQLLAQAQQLSGYTLGELAALAGLVTPENLKRDKGWIGVLLEIWLGASAGSKPEQDFAALGVELKTIPVDSLGRPLETTFVCVAPLTGNSGVTWETSHVRRKLKRVLWIPVEGERSIPLAKRRVGSPLLWSPNEEEDRQLREDWEELMDMIVLGQIERITARHGEYLQIRPKAANAKALTEAIGARGERILTLPRGFYLKKNFTSALLARHFLIQ.

Belongs to the MutH family.

Its subcellular location is the cytoplasm. Its function is as follows. Sequence-specific endonuclease that cleaves unmethylated GATC sequences. It is involved in DNA mismatch repair. The polypeptide is DNA mismatch repair protein MutH (Escherichia coli O6:K15:H31 (strain 536 / UPEC)).